The chain runs to 257 residues: MKNILLTNDDGFEAKGLLELAKKLGKIANVVIAAPSTEKSGSSQSLTLTRPLRFIKIDENFYKLDDATPADCVYLGLHALFKTKPDLIVSGINHGANIAEDITCSGTCGAAMQGALQGIPSLAVSQFFTGKSLKNSGFDLACDIAYKVVCKIFENGFPLLNKQFLNLNIPSVCKKDFKGLKIAPAGRKFYDTNAQNGINPRGKKYYWLGKMDIKFDISENQNTDIGLLSEGFATLTPIKPDMTAYEQINGLEKWLKI.

4 residues coordinate a divalent metal cation: D9, D10, S40, and N93.

It belongs to the SurE nucleotidase family. A divalent metal cation serves as cofactor.

The protein localises to the cytoplasm. The catalysed reaction is a ribonucleoside 5'-phosphate + H2O = a ribonucleoside + phosphate. Its function is as follows. Nucleotidase that shows phosphatase activity on nucleoside 5'-monophosphates. The sequence is that of 5'-nucleotidase SurE from Campylobacter hominis (strain ATCC BAA-381 / DSM 21671 / CCUG 45161 / LMG 19568 / NCTC 13146 / CH001A).